Consider the following 1044-residue polypeptide: Translation initiation factor IF-2 (1044 aa).

The disordered stretch occupies residues 31-425 (VRSASSTVEP…RKSKRAKRQE (395 aa)). Pro residues-rich tracts occupy residues 77–98 (GPAPAARPQAPAPAQPAPPQPA) and 106–116 (APAPAPAPRPA). Positions 117–148 (EPAANPAPAAPPAFQAPAPAPAERPAAAQRPA) are enriched in low complexity. The segment covering 168–185 (GGPGQGPRPGARPGGPGA) has biased composition (gly residues). Basic and acidic residues predominate over residues 204–247 (GPGDRPERSERPDRGDRPQGDRPRSDRPQGERQQGDRPQGDRPG). Residues 285–304 (GGAPRPGNNPFASNQGMPRP) show a composition bias toward low complexity. A compositionally biased stretch (pro residues) spans 305–328 (QGGPRPTPAGPGGPRPGGPRPNPG). Low complexity predominate over residues 329 to 338 (MMPARPTVGR). Over residues 339-409 (PGAGPGAGRP…GTQGAFGRAG (71 aa)) the composition is skewed to gly residues. The span at 413–422 (VRGRKSKRAK) shows a compositional bias: basic residues. In terms of domain architecture, tr-type G spans 537–709 (ARPPVVTVMG…VLLTADASLD (173 aa)). The segment at 546–553 (GHVDHGKT) is G1. Residue 546-553 (GHVDHGKT) coordinates GTP. The segment at 571–575 (GITQH) is G2. The interval 596–599 (DTPG) is G3. Residues 596-600 (DTPGH) and 650-653 (NKVD) each bind GTP. The tract at residues 650 to 653 (NKVD) is G4. Residues 686–688 (SAR) are G5.

It belongs to the TRAFAC class translation factor GTPase superfamily. Classic translation factor GTPase family. IF-2 subfamily.

The protein resides in the cytoplasm. One of the essential components for the initiation of protein synthesis. Protects formylmethionyl-tRNA from spontaneous hydrolysis and promotes its binding to the 30S ribosomal subunits. Also involved in the hydrolysis of GTP during the formation of the 70S ribosomal complex. In Kineococcus radiotolerans (strain ATCC BAA-149 / DSM 14245 / SRS30216), this protein is Translation initiation factor IF-2.